The chain runs to 298 residues: NAD kinase (298 aa).

The active-site Proton acceptor is the D80. NAD(+) contacts are provided by residues 80 to 81 (DG), 154 to 155 (ND), R182, D184, 195 to 200 (TAYALS), A219, and Q253.

Belongs to the NAD kinase family. It depends on a divalent metal cation as a cofactor.

The protein resides in the cytoplasm. It catalyses the reaction NAD(+) + ATP = ADP + NADP(+) + H(+). Its function is as follows. Involved in the regulation of the intracellular balance of NAD and NADP, and is a key enzyme in the biosynthesis of NADP. Catalyzes specifically the phosphorylation on 2'-hydroxyl of the adenosine moiety of NAD to yield NADP. This chain is NAD kinase, found in Paracidovorax citrulli (strain AAC00-1) (Acidovorax citrulli).